The following is a 470-amino-acid chain: UDP-glycosyltransferase 75C1 (470 aa).

The Proton acceptor role is filled by H16. H16 provides a ligand contact to an anthocyanidin. Residues Q347, H362, W365, N366, S367, E370, D386, and Q387 each coordinate UDP-alpha-D-glucose.

Belongs to the UDP-glycosyltransferase family. As to expression, expressed in flowers and fruits, especially in pulp, and, at lower levels, in seeds.

It is found in the cytoplasm. The protein resides in the nucleus. It carries out the reaction 2-cis-(+)-abscisate + UDP-alpha-D-glucose = beta-D-glucopyranosyl cis-(+)-abscisate + UDP. It catalyses the reaction (indol-3-yl)acetate + UDP-alpha-D-glucose = 1-O-(indol-3-ylacetyl)-beta-D-glucose + UDP. Its function is as follows. Glucosyltransferase acting on both abscisic acid (ABA) and auxin (IAA). Required for ABA-mediated fruit ripening, seed germination, and negative responses to drought. The sequence is that of UDP-glycosyltransferase 75C1 from Solanum lycopersicum (Tomato).